The following is a 144-amino-acid chain: Large ribosomal subunit protein uL13 (144 aa).

It belongs to the universal ribosomal protein uL13 family. Part of the 50S ribosomal subunit.

In terms of biological role, this protein is one of the early assembly proteins of the 50S ribosomal subunit, although it is not seen to bind rRNA by itself. It is important during the early stages of 50S assembly. The polypeptide is Large ribosomal subunit protein uL13 (Clostridium tetani (strain Massachusetts / E88)).